We begin with the raw amino-acid sequence, 133 residues long: Small ribosomal subunit protein uS8 (133 aa).

This sequence belongs to the universal ribosomal protein uS8 family. As to quaternary structure, part of the 30S ribosomal subunit. Contacts proteins S5 and S12.

One of the primary rRNA binding proteins, it binds directly to 16S rRNA central domain where it helps coordinate assembly of the platform of the 30S subunit. The protein is Small ribosomal subunit protein uS8 of Prochlorococcus marinus (strain AS9601).